The chain runs to 271 residues: Phosphonates import ATP-binding protein PhnC 2 (271 aa).

The ABC transporter domain maps to 2 to 245; sequence LVVEGLTCRF…IARELYDLEA (244 aa). Position 34-41 (34-41) interacts with ATP; the sequence is GRSGAGKS.

Belongs to the ABC transporter superfamily. Phosphonates importer (TC 3.A.1.9.1) family. The complex is composed of two ATP-binding proteins (PhnC), two transmembrane proteins (PhnE) and a solute-binding protein (PhnD).

Its subcellular location is the cell inner membrane. The catalysed reaction is phosphonate(out) + ATP + H2O = phosphonate(in) + ADP + phosphate + H(+). Part of the ABC transporter complex PhnCDE involved in phosphonates import. Responsible for energy coupling to the transport system. The protein is Phosphonates import ATP-binding protein PhnC 2 of Rhodopseudomonas palustris (strain BisB18).